A 278-amino-acid chain; its full sequence is Putative transcription factor kapC (278 aa).

Over residues 1–10 (MQPALAPAPH) the composition is skewed to pro residues. Residues 1–121 (MQPALAPAPH…QNRAAQRAFR (121 aa)) form a disordered region. Positions 56 to 68 (PTATTSPRDQNNI) are enriched in polar residues. The region spanning 103 to 166 (PLSTSKRAAQ…EYVINLQSRL (64 aa)) is the bZIP domain. The segment at 104–127 (LSTSKRAAQNRAAQRAFRQRKESY) is basic motif. Over residues 109–119 (RAAQNRAAQRA) the composition is skewed to low complexity. Positions 131–162 (LEEQVKEYEVMSQEYKALQAENYQLREYVINL) are leucine-zipper. The tract at residues 173–278 (VPELPGNIDL…PPTHGLPMVS (106 aa)) is disordered. Residues 198 to 214 (PGQAGASAPPQGSPQSQ) show a composition bias toward low complexity. Residues 215–226 (VSIANDDMNSLN) are compositionally biased toward polar residues. The span at 254 to 269 (GRGDETADPSETKTEP) shows a compositional bias: basic and acidic residues.

This sequence belongs to the bZIP family.

It is found in the nucleus. Putative transcription factor. In Emericella nidulans (strain FGSC A4 / ATCC 38163 / CBS 112.46 / NRRL 194 / M139) (Aspergillus nidulans), this protein is Putative transcription factor kapC (kapC).